The primary structure comprises 1802 residues: Bromodomain and WD repeat-containing protein 3 (1802 aa).

WD repeat units follow at residues 170–209, 213–251, 255–297, 307–347, 353–393, 400–452, 456–495, and 502–542; these read IKMHKRILGHLSSVYCVAFDRSGRRIFTGSDDCLVKIWAT, RLLATLRGHSAEISDMAVNYENTLIAAGSCDKVVRVWCL, APVA…FWQW, RPVK…IYYL, EKIA…IWQY, SIVL…VWNS, QLLHTLSGHDDEVFVLEAHPFDQRIILSAGHDGNIFIWDL, and RNYF…LFGF. 2 positions are modified to phosphoserine: Ser-693 and Ser-703. Residues 768–910 are disordered; that stretch reads KPSYTTQRND…PKQTRKKKGG (143 aa). Residues 785-795 are compositionally biased toward basic residues; sequence SLRRTQRKRQH. A compositionally biased stretch (polar residues) spans 796–817; it reads TYQTRSNIEHNSQASCQNSGVQ. The segment covering 818–829 has biased composition (acidic residues); sequence EDSDSSSEEDET. The span at 846 to 859 shows a compositional bias: low complexity; that stretch reads SESSSSDSSSEYSD. A phosphoserine mark is found at Ser-885 and Ser-886. The span at 889–898 shows a compositional bias: basic and acidic residues; that stretch reads ENLKSLEERQ. Residues 899-909 show a composition bias toward basic residues; that stretch reads KKPKQTRKKKG. One can recognise a Bromo 1 domain in the interval 1138 to 1245; sequence WGAHSRDEEC…DVLLRFIGDQ (108 aa). Disordered stretches follow at residues 1262–1292, 1326–1361, 1438–1500, and 1520–1725; these read RNSTDAEEDTEIVDLDSDGPGTSSGRKVKCR, RQPADLLSYPGHQEQEGESSESVVPERQQDSSLSED, IQSQ…SPVS, and SSSS…RAKR. Positions 1266-1278 are enriched in acidic residues; sequence DAEEDTEIVDLDS. Positions 1300–1430 constitute a Bromo 2 domain; it reads CNPDAWKKQC…ALFESHIKNI (131 aa). Over residues 1441 to 1453 the composition is skewed to basic residues; that stretch reads QKRRRPRYRKRLR. Low complexity predominate over residues 1454-1468; that stretch reads SSSSSLSSSGAPSPK. The span at 1479-1499 shows a compositional bias: polar residues; it reads KNDQNTSVSHARTSSPFSSPV. Residues 1520–1533 are compositionally biased toward low complexity; it reads SSSSFGGYSRSGNS. Phosphoserine is present on residues Ser-1577 and Ser-1579. A compositionally biased stretch (basic and acidic residues) spans 1587–1600; that stretch reads GEDKEKKETKEKSH. The span at 1601 to 1626 shows a compositional bias: low complexity; it reads LSTSESGELGSSLSSESTCGSDSDSE. A compositionally biased stretch (basic and acidic residues) spans 1627-1643; the sequence is STSRTDQDYVDGDHDYS. 2 stretches are compositionally biased toward basic residues: residues 1649–1666 and 1684–1697; these read RPKRKLRKQHGNGKRNWK and RGGRGRGGRGRGSR. Residue Ser-1763 is modified to Phosphoserine.

As to expression, found in most adult tissues. Down-regulated in a majority of the B-CLL cases examined.

Functionally, plays a role in the regulation of cell morphology and cytoskeletal organization. Required in the control of cell shape. The polypeptide is Bromodomain and WD repeat-containing protein 3 (BRWD3) (Homo sapiens (Human)).